Consider the following 245-residue polypeptide: 1-(5-phosphoribosyl)-5-[(5-phosphoribosylamino)methylideneamino] imidazole-4-carboxamide isomerase (245 aa).

The active-site Proton acceptor is D7. D129 functions as the Proton donor in the catalytic mechanism.

Belongs to the HisA/HisF family.

It is found in the cytoplasm. The catalysed reaction is 1-(5-phospho-beta-D-ribosyl)-5-[(5-phospho-beta-D-ribosylamino)methylideneamino]imidazole-4-carboxamide = 5-[(5-phospho-1-deoxy-D-ribulos-1-ylimino)methylamino]-1-(5-phospho-beta-D-ribosyl)imidazole-4-carboxamide. The protein operates within amino-acid biosynthesis; L-histidine biosynthesis; L-histidine from 5-phospho-alpha-D-ribose 1-diphosphate: step 4/9. The protein is 1-(5-phosphoribosyl)-5-[(5-phosphoribosylamino)methylideneamino] imidazole-4-carboxamide isomerase of Shigella boydii serotype 18 (strain CDC 3083-94 / BS512).